We begin with the raw amino-acid sequence, 197 residues long: Probable nicotinate-nucleotide adenylyltransferase (197 aa).

The protein belongs to the NadD family.

It carries out the reaction nicotinate beta-D-ribonucleotide + ATP + H(+) = deamido-NAD(+) + diphosphate. Its pathway is cofactor biosynthesis; NAD(+) biosynthesis; deamido-NAD(+) from nicotinate D-ribonucleotide: step 1/1. Functionally, catalyzes the reversible adenylation of nicotinate mononucleotide (NaMN) to nicotinic acid adenine dinucleotide (NaAD). This is Probable nicotinate-nucleotide adenylyltransferase from Bordetella parapertussis (strain 12822 / ATCC BAA-587 / NCTC 13253).